Here is a 370-residue protein sequence, read N- to C-terminus: Apolipoprotein A-V (370 aa).

An N-terminal signal peptide occupies residues 1 to 21 (MASMIALLTWALALLPALASA). The residue at position 59 (Ser-59) is a Phosphoserine.

It belongs to the apolipoprotein A1/A4/E family. In terms of assembly, interacts with GPIHBP1. Interacts with SORL1; this interaction leads to APOA5 internalization and sorting either to lysosomes and degradation, or to the trans-Golgi network.

It localises to the secreted. The protein localises to the early endosome. Its subcellular location is the late endosome. The protein resides in the golgi apparatus. It is found in the trans-Golgi network. In terms of biological role, minor apolipoprotein mainly associated with HDL and to a lesser extent with VLDL. May also be associated with chylomicrons. Important determinant of plasma triglyceride (TG) levels by both being a potent stimulator of apo-CII lipoprotein lipase (LPL) TG hydrolysis and an inhibitor of the hepatic VLDL-TG production rate (without affecting the VLDL-apoB production rate). Activates poorly lecithin:cholesterol acyltransferase (LCAT) and does not enhance efflux of cholesterol from macrophages. Binds heparin. This is Apolipoprotein A-V (APOA5) from Acinonyx jubatus (Cheetah).